The chain runs to 242 residues: N-glycosylase/DNA lyase (242 aa).

3 residues coordinate 8-oxoguanine: Gln-25, Ser-52, and Trp-63. A helix-hairpin-helix region spans residues Lys-119–Arg-183. Lys-143 serves as the catalytic Schiff-base intermediate with DNA. The 8-oxoguanine site is built by Phe-147 and Pro-173. Asp-175 is an active-site residue. 8-oxoguanine contacts are provided by Asp-209 and Trp-213.

Belongs to the archaeal N-glycosylase/DNA lyase (AGOG) family.

It carries out the reaction 2'-deoxyribonucleotide-(2'-deoxyribose 5'-phosphate)-2'-deoxyribonucleotide-DNA = a 3'-end 2'-deoxyribonucleotide-(2,3-dehydro-2,3-deoxyribose 5'-phosphate)-DNA + a 5'-end 5'-phospho-2'-deoxyribonucleoside-DNA + H(+). DNA repair enzyme that is part of the base excision repair (BER) pathway; protects from oxidative damage by removing the major product of DNA oxidation, 8-oxoguanine (GO), from single- and double-stranded DNA substrates. This is N-glycosylase/DNA lyase from Methanopyrus kandleri (strain AV19 / DSM 6324 / JCM 9639 / NBRC 100938).